Reading from the N-terminus, the 200-residue chain is Pyridoxal 5'-phosphate synthase subunit PdxT (200 aa).

52-54 contributes to the L-glutamine binding site; the sequence is GES. C84 serves as the catalytic Nucleophile. Residues R116 and 145–146 contribute to the L-glutamine site; that span reads IR. Residues H181 and E183 each act as charge relay system in the active site.

This sequence belongs to the glutaminase PdxT/SNO family. In terms of assembly, in the presence of PdxS, forms a dodecamer of heterodimers. Only shows activity in the heterodimer.

The enzyme catalyses aldehydo-D-ribose 5-phosphate + D-glyceraldehyde 3-phosphate + L-glutamine = pyridoxal 5'-phosphate + L-glutamate + phosphate + 3 H2O + H(+). It catalyses the reaction L-glutamine + H2O = L-glutamate + NH4(+). The protein operates within cofactor biosynthesis; pyridoxal 5'-phosphate biosynthesis. Catalyzes the hydrolysis of glutamine to glutamate and ammonia as part of the biosynthesis of pyridoxal 5'-phosphate. The resulting ammonia molecule is channeled to the active site of PdxS. In Sulfolobus acidocaldarius (strain ATCC 33909 / DSM 639 / JCM 8929 / NBRC 15157 / NCIMB 11770), this protein is Pyridoxal 5'-phosphate synthase subunit PdxT.